We begin with the raw amino-acid sequence, 937 residues long: MVCPNGYDPGGRHLLLFIIILAAWEAGRGQLHYSVPEEAKHGNFVGRIAQDLGLELAELVPRLFRAVCKFRGDLLEVNLQNGILFVNSRIDREELCGRSAECSIHLEVIVERPLQVFHVDVEVKDINDNPPVFPATQRNLFIAESRPLDSRFPLEGASDADIGENALLTYRLSPNEYFFLDVPTSNQQVKPLGLVLRKLLDREETPELHLLLTATDGGKPELTGTVQLLITVLDNNDNAPVFDRTLYTVKLPENVSIGTLVIHPNASDLDEGLNGDIIYSFSSDVSPDIKSKFHMDPLSGAITVIGHMDFEESRAHKIPVEAVDKGFPPLAGHCTVLVEVVDVNDNAPQLTLTSLSLPIPEDAQPGTVITLISVFDRDFGVNGQVTCSLTPRVPFKLVSTFKNYYSLVLDSALDRESVSAYELVVTARDGGSPSLWATASVSVEVADVNDNAPAFAQPEYTVFVKENNPPGCHIFTVSAGDADAQKNALVSYSLVELRVGERALSSYVSVHAESGKVYALQPLDHEELELLQFQVSARDAGVPPLGSNVTLQVFVLDENDNAPALLAPRVGGTGGAVRELVPRSVGAGHVVAKVRAVDADSGYNAWLSYELQPVAAGASIPFRVGLYTGEISTTRALDETDAPRHRLLVLVKDHGEPSLTATATVLVSLVESGQAPKASSRASLGIAGPETELVDVNVYLIIAICAVSSLLVLTLLLYTALRCSAPSSEGACSLVKPTLVCSSAVGSWSFSQQRRQRVCSGEGPPKTDLMAFSPSLPQGPSSTDNPRQPNPDWRYSASLRAGMHSSVHLEEAGILRAGPGGPDQQWPTVSSATPEPEAGEVSPPVGAGVNSNSWTFKYGPGNPKQSGPGELPDKFIIPGSPAIISIRQEPTNSQIDKSDFITFGKKEETKKKKKKKKGNKTQEKKEKGNSTTDNSDQ.

Residues 1–29 (MVCPNGYDPGGRHLLLFIIILAAWEAGRG) form the signal peptide. Cadherin domains are found at residues 30–133 (QLHY…PPVF), 134–242 (PATQ…APVF), 243–350 (DRTL…APQL), 351–455 (TLTS…APAF), 456–565 (AQPE…APAL), and 581–678 (VPRS…APKA). At 30 to 697 (QLHYSVPEEA…GPETELVDVN (668 aa)) the chain is on the extracellular side. Residues Cys-96 and Cys-102 are joined by a disulfide bond. N-linked (GlcNAc...) asparagine glycosylation is found at Asn-254 and Asn-265. The N-linked (GlcNAc...) asparagine glycan is linked to Asn-548. Residues 698-718 (VYLIIAICAVSSLLVLTLLLY) traverse the membrane as a helical segment. Residues 719-937 (TALRCSAPSS…GNSTTDNSDQ (219 aa)) are Cytoplasmic-facing. Disordered stretches follow at residues 755–795 (RQRV…DWRY) and 814–937 (ILRA…NSDQ). 5 PXXP repeats span residues 774–777 (PSLP), 786–789 (PRQP), 819–822 (PGGP), 860–863 (PGNP), and 878–881 (PGSP). The tract at residues 774–881 (PSLPQGPSST…PDKFIIPGSP (108 aa)) is 5 X 4 AA repeats of P-X-X-P. Residues 775 to 787 (SLPQGPSSTDNPR) show a composition bias toward polar residues. A compositionally biased stretch (basic and acidic residues) spans 896 to 910 (DKSDFITFGKKEETK).

As to quaternary structure, forms homodimers in trans (molecules expressed by two different cells). Forms promiscuous heterodimers in cis (at the plasma membrane of the same cell) with other protocadherins.

The protein localises to the cell membrane. Functionally, calcium-dependent cell-adhesion protein involved in cells self-recognition and non-self discrimination. Thereby, it is involved in the establishment and maintenance of specific neuronal connections in the brain. This chain is Protocadherin alpha-7, found in Homo sapiens (Human).